The chain runs to 1236 residues: Calcium-activated potassium channel subunit alpha-1 (1236 aa).

The span at 1–21 (MANGGGGGGGSSGGGGGGGGS) shows a compositional bias: gly residues. Residues 1-61 (MANGGGGGGG…SSSSSSSSSV (61 aa)) form a disordered region. At 1-86 (MANGGGGGGG…VPCDSRGQRM (86 aa)) the chain is on the extracellular side. A compositionally biased stretch (low complexity) spans 39–60 (SSSSSSSSSSSSSSSSSSSSSS). Residues 87-107 (WWAFLASSMVTFFGGLFIILL) traverse the membrane as a helical segment. Residues 108–178 (WRTLKYLWTV…MISAQTLTGR (71 aa)) are Cytoplasmic-facing. Residues cysteine 118, cysteine 119, and cysteine 121 are each lipidated (S-palmitoyl cysteine). Residues 179-199 (VLVVLVFALSIGALVIYFIDS) form a helical membrane-spanning segment. Topologically, residues 200-214 (SNPIESCQNFYKDFT) are extracellular. Residues 215–235 (LQIDMAFNVFFLLYFGLRFIA) traverse the membrane as a helical segment. Topologically, residues 236–239 (ANDK) are cytoplasmic. Residues 240 to 260 (LWFWLEVNSVVDFFTVPPVFV) traverse the membrane as a helical segment. Residues 261–264 (SVYL) lie on the Extracellular side of the membrane. A helical transmembrane segment spans residues 265–285 (NRSWLGLRFLRALRLIQFSEI). Residues 286–300 (LQFLNILKTSNSIKL) lie on the Cytoplasmic side of the membrane. Residues 301–321 (VNLLSIFISTWLTAAGFIHLV) form a helical membrane-spanning segment. Over 322–335 (ENSGDPWENFQNNQ) the chain is Extracellular. The segment at residues 336-358 (ALTYWECVYLLMVTMSTVGYGDV) is an intramembrane region (pore-forming). A Selectivity for potassium motif is present at residues 352–355 (TVGY). Over 359 to 367 (YAKTTLGRL) the chain is Extracellular. The chain crosses the membrane as a helical span at residues 368-388 (FMVFFILGGLAMFASYVPEII). At 389 to 1236 (ELIGNRKKYG…KQKYVQEERL (848 aa)) the chain is on the cytoplasmic side. The region spanning 407–549 (RKHIVVCGHI…WNWKEGDDAI (143 aa)) is the RCK N-terminal 1 domain. Mg(2+) contacts are provided by glutamate 439, glutamine 462, and glutamate 464. The segment S7 stretch occupies residues 556 to 576 (LGFIAQSCLAQGLSTMLANLF). Residues 613–633 (LSFPTVCELCFVKLKLLMIAI) are segment S8. The tract at residues 677 to 681 (CKACH) is heme-binding motif. A disordered region spans residues 757–787 (EDEQPSTLSPKKKQRNGGMRNSPNTSPKLMR). Residue threonine 763 is modified to Phosphothreonine. 3 positions are modified to phosphoserine: serine 765, serine 778, and serine 782. The segment S9 stretch occupies residues 837–857 (VLSGHVVVCIFGDVSSALIGL). The RCK N-terminal 2 domain maps to 839-983 (SGHVVVCIFG…MDRSSPDNSP (145 aa)). Threonine 970 bears the Phosphothreonine mark. Phosphoserine is present on residues serine 978 and serine 982. The Calcium bowl signature appears at 1003–1025 (TELVNDTNVQFLDQDDDDDPDTE). Residues glutamine 1012, aspartate 1015, aspartate 1018, and aspartate 1020 each contribute to the Ca(2+) site. The segment at 1032 to 1052 (FACGTAFAVSVLDSLMSATYF) is segment S10. Residues 1186-1211 (RASLSHSSHSSQSSSKKSSSVHSIPS) show a composition bias toward low complexity. The disordered stretch occupies residues 1186 to 1236 (RASLSHSSHSSQSSSKKSSSVHSIPSTANRQNRPKSRESRDKQKYVQEERL). Over residues 1220–1236 (KSRESRDKQKYVQEERL) the composition is skewed to basic and acidic residues. Phosphoserine is present on residues serine 1221 and serine 1224.

It belongs to the potassium channel family. Calcium-activated (TC 1.A.1.3) subfamily. KCa1.1/KCNMA1 sub-subfamily. As to quaternary structure, homotetramer; which constitutes the calcium-activated potassium channel. Interacts with RAB11B. Interacts with beta subunits KCNMB1, KCNMB2, KCNMB3 and KCNMB4. Interacts with gamma subunits LRRC26, LRRC38, LRRC52 and LRRC55. Beta and gamma subunits are accessory, and modulate its activity. In terms of processing, phosphorylated. Phosphorylation by kinases such as PKA and/or PKG. In smooth muscles, phosphorylation affects its activity. Post-translationally, palmitoylation by ZDHHC22 and ZDHHC23 within the intracellular linker between the S0 and S1 transmembrane domains regulates localization to the plasma membrane. Depalmitoylated by LYPLA1 and LYPLAL1, leading to retard exit from the trans-Golgi network. Widely expressed. Except in myocytes, it is almost ubiquitously expressed.

Its subcellular location is the cell membrane. The enzyme catalyses K(+)(in) = K(+)(out). Ethanol and carbon monoxide-bound heme increase channel activation. Heme inhibits channel activation. Potassium channel activated by both membrane depolarization or increase in cytosolic Ca(2+) that mediates export of K(+). It is also activated by the concentration of cytosolic Mg(2+). Its activation dampens the excitatory events that elevate the cytosolic Ca(2+) concentration and/or depolarize the cell membrane. It therefore contributes to repolarization of the membrane potential. Plays a key role in controlling excitability in a number of systems, such as regulation of the contraction of smooth muscle, the tuning of hair cells in the cochlea, regulation of transmitter release, and innate immunity. In smooth muscles, its activation by high level of Ca(2+), caused by ryanodine receptors in the sarcoplasmic reticulum, regulates the membrane potential. In cochlea cells, its number and kinetic properties partly determine the characteristic frequency of each hair cell and thereby helps to establish a tonotopic map. Kinetics of KCNMA1 channels are determined by alternative splicing, phosphorylation status and its combination with modulating beta subunits. Highly sensitive to both iberiotoxin (IbTx) and charybdotoxin (CTX). Possibly induces sleep when activated by melatonin and through melatonin receptor MTNR1A-dependent dissociation of G-beta and G-gamma subunits, leading to increased sensitivity to Ca(2+) and reduced synaptic transmission. In terms of biological role, potassium channel activated by both membrane depolarization or increase in cytosolic Ca(2+) that mediates export of K(+). This is Calcium-activated potassium channel subunit alpha-1 from Homo sapiens (Human).